A 1344-amino-acid polypeptide reads, in one-letter code: Centrosomal P4.1-associated protein (1344 aa).

Disordered regions lie at residues 67 to 123 (SSEE…NNDL) and 187 to 225 (PGTLLPDDQSQKHRSPGDLTLPPHSYSNPTQENSCASNV). Over residues 211–225 (SYSNPTQENSCASNV) the composition is skewed to polar residues. Serine 248 carries the phosphoserine modification. Residues 257–300 (QEAHVKRNDLKEESPAHPSGEGALPRWEKKMGRSQEGKDVNLQK) form a disordered region. Composition is skewed to basic and acidic residues over residues 259–271 (AHVKRNDLKEESP) and 282–297 (RWEKKMGRSQEGKDVN). Serine 304 bears the Phosphoserine mark. The alpha/beta-tubulin binding stretch occupies residues 307 to 382 (VVNIDERPIK…FTNAKSKFQK (76 aa)). 2 disordered regions span residues 347–407 (QEAE…DRQH) and 425–470 (TVKK…KKRD). Residues 388–398 (LASTQSPSEDQ) show a composition bias toward polar residues. A Phosphoserine modification is found at serine 528. Phosphoserine; by PLK2 is present on residues serine 577 and serine 583. Disordered stretches follow at residues 600–626 (RLSSTPVKAVQQREAQQADPRGQSNCS) and 672–735 (TSEI…DTGA). Over residues 709 to 720 (VGDRVFSNREDS) the composition is skewed to basic and acidic residues. Serine 748 is modified (phosphoserine). Residues 887–1344 (QPPEFMVCFI…DGNVLMDTEM (458 aa)) form an interaction with STIL region. The segment at 1105 to 1133 (QGNLSRRIKSAPPRDLGSSDKGQAALPRE) is disordered.

Belongs to the TCP10 family. As to quaternary structure, forms homodimers. Associates with microtubules plus ends; binds to beta-tubulin subunits exposed on microtubule outer surface at its distal tip; also associates with microtubule lattice. Associated with the gamma-tubulin complex. Interacts with the head domain of EPB41. Interacts with LYST. Interacts with CEP152 (via C-terminus). Interacts with STIL. Forms a complex with STIL and SASS6. In terms of processing, phosphorylation at Ser-577 and Ser-583 by PLK2 is required for procentriole formation and centriole elongation. Phosphorylation by PLK2 oscillates during the cell cycle: it increases at G1/S transition and decreases during the exit from mitosis. Phosphorylation at Ser-583 is also mediated by PLK4 but is not a critical step in PLK4 function in procentriole assembly.

The protein localises to the cytoplasm. The protein resides in the cytoskeleton. It is found in the microtubule organizing center. Its subcellular location is the centrosome. It localises to the centriole. In terms of biological role, plays an important role in cell division and centrosome function by participating in centriole duplication. Inhibits microtubule nucleation from the centrosome. Involved in the regulation of slow processive growth of centriolar microtubules. Acts as microtubule plus-end tracking protein that stabilizes centriolar microtubules and inhibits microtubule polymerization and extension from the distal ends of centrioles. Required for centriole elongation and for STIL-mediated centriole amplification. Required for the recruitment of CEP295 to the proximal end of new-born centrioles at the centriolar microtubule wall during early S phase in a PLK4-dependent manner. May be involved in the control of centriolar-microtubule growth by acting as a regulator of tubulin release. The sequence is that of Centrosomal P4.1-associated protein (Cpap) from Mus musculus (Mouse).